The chain runs to 83 residues: Sec-independent protein translocase protein TatA (83 aa).

The chain crosses the membrane as a helical span at residues 1 to 21; it reads MGNMGIWQLLIIAVIVILLFG. 2 stretches are compositionally biased toward basic and acidic residues: residues 47–57 and 71–83; these read EEKKALEETAS and AEKKTETKDKEQV. The disordered stretch occupies residues 47–83; the sequence is EEKKALEETASEKATPSVEKTAPNAEKKTETKDKEQV.

The protein belongs to the TatA/E family. The Tat system comprises two distinct complexes: a TatABC complex, containing multiple copies of TatA, TatB and TatC subunits, and a separate TatA complex, containing only TatA subunits. Substrates initially bind to the TatABC complex, which probably triggers association of the separate TatA complex to form the active translocon.

It is found in the cell inner membrane. Part of the twin-arginine translocation (Tat) system that transports large folded proteins containing a characteristic twin-arginine motif in their signal peptide across membranes. TatA could form the protein-conducting channel of the Tat system. In Shewanella woodyi (strain ATCC 51908 / MS32), this protein is Sec-independent protein translocase protein TatA.